A 413-amino-acid polypeptide reads, in one-letter code: Protein trichome birefringence-like 31 (413 aa).

The helical; Signal-anchor for type II membrane protein transmembrane segment at 12–34 (IQSIFQVVLVSLLVLGSVRWILD) threads the bilayer. The GDS motif motif lies at 141 to 143 (GDS). Positions 384–398 (DCIHWCLPGVPDTWN) match the DCXHWCLPGXXDXWN motif motif.

This sequence belongs to the PC-esterase family. TBL subfamily.

The protein resides in the membrane. In terms of biological role, may act as a bridging protein that binds pectin and other cell wall polysaccharides. Probably involved in maintaining esterification of pectins. May be involved in the specific O-acetylation of cell wall polymers. This is Protein trichome birefringence-like 31 (TBL31) from Arabidopsis thaliana (Mouse-ear cress).